We begin with the raw amino-acid sequence, 555 residues long: Phosphoglucomutase (555 aa).

Substrate is bound by residues T45, R49, 148 to 149 (SH), and K158. S148 (phosphoserine intermediate) is an active-site residue. Position 148 (S148) interacts with Mg(2+). D306, D308, and D310 together coordinate Mg(2+). Substrate-binding positions include 310-311 (DR) and 393-395 (EES).

This sequence belongs to the phosphohexose mutase family. Mg(2+) is required as a cofactor.

It carries out the reaction alpha-D-glucose 1-phosphate = alpha-D-glucose 6-phosphate. Functionally, this enzyme participates in both the breakdown and synthesis of glucose. This is Phosphoglucomutase (celB) from Komagataeibacter xylinus (Gluconacetobacter xylinus).